A 155-amino-acid polypeptide reads, in one-letter code: SsrA-binding protein (155 aa).

It belongs to the SmpB family.

It is found in the cytoplasm. Functionally, required for rescue of stalled ribosomes mediated by trans-translation. Binds to transfer-messenger RNA (tmRNA), required for stable association of tmRNA with ribosomes. tmRNA and SmpB together mimic tRNA shape, replacing the anticodon stem-loop with SmpB. tmRNA is encoded by the ssrA gene; the 2 termini fold to resemble tRNA(Ala) and it encodes a 'tag peptide', a short internal open reading frame. During trans-translation Ala-aminoacylated tmRNA acts like a tRNA, entering the A-site of stalled ribosomes, displacing the stalled mRNA. The ribosome then switches to translate the ORF on the tmRNA; the nascent peptide is terminated with the 'tag peptide' encoded by the tmRNA and targeted for degradation. The ribosome is freed to recommence translation, which seems to be the essential function of trans-translation. The protein is SsrA-binding protein of Bordetella parapertussis (strain 12822 / ATCC BAA-587 / NCTC 13253).